The chain runs to 550 residues: MKSKSIIAQLLYVLIAFMAVSCVADKSEPCPSGEPTRVSGSIVSLEHHGLRGASADKENSVERLELWVFDEDGHFLERAVADLSGSTFTAKIIPSEVERRIHFIANYELADPSVWVGRSEREMLPSISVADDLETIRMWARISYPSIAPNQNLGQIQLLRNMAKFSLSVTPPAESKLYDASYALYNSWNKGTLAPFDPNTGSFPQGQITEPAGVVFANPTSEAAFKEADGAHFFYGFERDQSNIGTGAGITCLILKARYNLPNADYTYYKLDFVDTNKVRYNITRNHFYKMILKKAKAPGRPTLQEALDGAAANNIFLSAEVQALPAFSDGSGMLTVDHTYMVFVQGEPSGTFQATYIPQGQNNPDYSKLTVSVSTPTGQQAAVTSAQHEGNGKIKLTLAQQENLTKRSDVVIGVQGNPDLKRSVTVLVREKYQYVFFKANTSSAENNQVTTQISAGQGNELLISAKLPDVLNAALLPITFKVYTEHFYPKTGGMILGIEGGKTLYKYVLTTMPQNKELQFRFKSNKVNSAENIAVKMDYFHDQTIHVTN.

An N-terminal signal peptide occupies residues 1–21; that stretch reads MKSKSIIAQLLYVLIAFMAVS. A lipid anchor (N-palmitoyl cysteine) is attached at C22. Residue C22 is the site of S-diacylglycerol cysteine attachment. A propeptide spanning residues 22-51 is cleaved from the precursor; that stretch reads CVADKSEPCPSGEPTRVSGSIVSLEHHGLR.

Belongs to the FimE family. As to quaternary structure, fimbriae are composed of a major, structural subunit and the minor components FimC, FimD and FimE. Identified in a complex composed of FimC, FimD and FimE (in vitro). Does not directly interact with host proteins, but only as a complex with FimC and FimD.

It is found in the fimbrium. The protein localises to the cell outer membrane. Probably a component of the fimbrium tip; required for incorporation of FimC and FimD into fimbriae. These long, filamentous pili are attached to the cell surface; they mediate biofilm formation, adhesion onto host cells and onto other bacteria that are part of the oral microbiome. They play an important role in invasion of periodontal tissues and are major virulence factors. FimC, FimD and FimE contribute to interaction with host CXCR4 and thereby down-regulate the TLR2-mediated host immune response. This chain is Major fimbrium tip subunit FimE, found in Porphyromonas gingivalis (strain ATCC 33277 / DSM 20709 / CIP 103683 / JCM 12257 / NCTC 11834 / 2561).